Here is an 863-residue protein sequence, read N- to C-terminus: Phycobiliprotein ApcE (863 aa).

C178 is a (2R,3E)-phycocyanobilin binding site. 3 PBS-linker domains span residues 235–414 (DLQG…RFQK), 473–652 (PIEN…KLQP), and 671–852 (NNII…FILM).

It belongs to the phycobilisome linker protein family. Contains one covalently linked bilin chromophore. This protein autochromophorylates (Potential).

It is found in the plastid. It localises to the chloroplast thylakoid membrane. In terms of biological role, this protein is postulated to act both as terminal energy acceptor and as a linker polypeptide that stabilizes the phycobilisome architecture. May have intrinsic bilin lyase activity. This is Phycobiliprotein ApcE (apcE) from Galdieria sulphuraria (Red alga).